Here is a 117-residue protein sequence, read N- to C-terminus: Peptidyl-tRNA hydrolase (117 aa).

This sequence belongs to the PTH2 family.

Its subcellular location is the cytoplasm. It catalyses the reaction an N-acyl-L-alpha-aminoacyl-tRNA + H2O = an N-acyl-L-amino acid + a tRNA + H(+). Its function is as follows. The natural substrate for this enzyme may be peptidyl-tRNAs which drop off the ribosome during protein synthesis. In Metallosphaera sedula (strain ATCC 51363 / DSM 5348 / JCM 9185 / NBRC 15509 / TH2), this protein is Peptidyl-tRNA hydrolase.